Here is a 195-residue protein sequence, read N- to C-terminus: Putative NADH dehydrogenase/NAD(P)H nitroreductase Caul_0018 (195 aa).

It belongs to the nitroreductase family. HadB/RutE subfamily. FMN is required as a cofactor.

This Caulobacter sp. (strain K31) protein is Putative NADH dehydrogenase/NAD(P)H nitroreductase Caul_0018.